A 161-amino-acid polypeptide reads, in one-letter code: Endoribonuclease YbeY (161 aa).

3 residues coordinate Zn(2+): H121, H125, and H131.

This sequence belongs to the endoribonuclease YbeY family. Requires Zn(2+) as cofactor.

Its subcellular location is the cytoplasm. Its function is as follows. Single strand-specific metallo-endoribonuclease involved in late-stage 70S ribosome quality control and in maturation of the 3' terminus of the 16S rRNA. This is Endoribonuclease YbeY from Xanthomonas campestris pv. campestris (strain 8004).